The following is a 299-amino-acid chain: Acetylglutamate kinase (299 aa).

Residues 72-73 (GG), Arg-94, and Asn-196 contribute to the substrate site.

This sequence belongs to the acetylglutamate kinase family. ArgB subfamily.

The protein resides in the cytoplasm. The enzyme catalyses N-acetyl-L-glutamate + ATP = N-acetyl-L-glutamyl 5-phosphate + ADP. The protein operates within amino-acid biosynthesis; L-arginine biosynthesis; N(2)-acetyl-L-ornithine from L-glutamate: step 2/4. In terms of biological role, catalyzes the ATP-dependent phosphorylation of N-acetyl-L-glutamate. The chain is Acetylglutamate kinase from Burkholderia mallei (strain NCTC 10247).